The chain runs to 653 residues: Threonine--tRNA ligase (653 aa).

Residues 1-61 (MIKITFPDGN…NEDAEVKLFK (61 aa)) form the TGS domain. The interval 243-542 (DHRKIGKELE…LIEHTAGKFP (300 aa)) is catalytic. C338, H389, and H519 together coordinate Zn(2+).

Belongs to the class-II aminoacyl-tRNA synthetase family. As to quaternary structure, homodimer. Requires Zn(2+) as cofactor.

It is found in the cytoplasm. The enzyme catalyses tRNA(Thr) + L-threonine + ATP = L-threonyl-tRNA(Thr) + AMP + diphosphate + H(+). Functionally, catalyzes the attachment of threonine to tRNA(Thr) in a two-step reaction: L-threonine is first activated by ATP to form Thr-AMP and then transferred to the acceptor end of tRNA(Thr). Also edits incorrectly charged L-seryl-tRNA(Thr). This chain is Threonine--tRNA ligase, found in Porphyromonas gingivalis (strain ATCC BAA-308 / W83).